The sequence spans 949 residues: Bifunctional uridylyltransferase/uridylyl-removing enzyme (949 aa).

Residues 1–37 form a disordered region; the sequence is MKETSFWGETPSLSFADDTDKPLSDRTASPPCDPASS. The uridylyltransferase stretch occupies residues 1–395; that stretch reads MKETSFWGET…TTGEPPKVVP (395 aa). The uridylyl-removing stretch occupies residues 396–756; that stretch reads GPEEFQTIAG…AYPIPERGVT (361 aa). Positions 516–632 constitute an HD domain; that stretch reads VDEHIVEAVR…LDLADTIQSP (117 aa). ACT domains lie at 757 to 834 and 870 to 949; these read ELTV…LDIR and VIEV…TPAS.

The protein belongs to the GlnD family. Mg(2+) serves as cofactor.

The catalysed reaction is [protein-PII]-L-tyrosine + UTP = [protein-PII]-uridylyl-L-tyrosine + diphosphate. It catalyses the reaction [protein-PII]-uridylyl-L-tyrosine + H2O = [protein-PII]-L-tyrosine + UMP + H(+). Uridylyltransferase (UTase) activity is inhibited by glutamine, while glutamine activates uridylyl-removing (UR) activity. Modifies, by uridylylation and deuridylylation, the PII regulatory proteins (GlnB and homologs), in response to the nitrogen status of the cell that GlnD senses through the glutamine level. Under low glutamine levels, catalyzes the conversion of the PII proteins and UTP to PII-UMP and PPi, while under higher glutamine levels, GlnD hydrolyzes PII-UMP to PII and UMP (deuridylylation). Thus, controls uridylylation state and activity of the PII proteins, and plays an important role in the regulation of nitrogen assimilation and metabolism. This chain is Bifunctional uridylyltransferase/uridylyl-removing enzyme, found in Gluconobacter oxydans (strain 621H) (Gluconobacter suboxydans).